Consider the following 256-residue polypeptide: Lysine-rich coiled-coil protein 1 (256 aa).

Disordered stretches follow at residues 62–84 (RLPSGTNHSYPRSCSSSQTEDRV) and 144–256 (TIDP…ILGF). The span at 64 to 79 (PSGTNHSYPRSCSSSQ) shows a compositional bias: polar residues. 2 stretches are compositionally biased toward basic and acidic residues: residues 161-188 (HVEEGREKQEERPKHERKRSSEEMDLNK) and 218-227 (KTRDVSSKKE). Positions 209 to 247 (EKLKNRKEKKTRDVSSKKEDRKRRKEKKEQGEERTEEEM) form a coiled coil.

This is Lysine-rich coiled-coil protein 1 (Krcc1) from Mus musculus (Mouse).